Consider the following 423-residue polypeptide: UDP-N-acetylglucosamine 1-carboxyvinyltransferase (423 aa).

Residue Lys-22 to Asn-23 participates in phosphoenolpyruvate binding. Arg-93 lines the UDP-N-acetyl-alpha-D-glucosamine pocket. The Proton donor role is filled by Cys-117. Residue Cys-117 is modified to 2-(S-cysteinyl)pyruvic acid O-phosphothioketal. UDP-N-acetyl-alpha-D-glucosamine-binding positions include Arg-122–Leu-126, Asp-308, and Ile-330.

The protein belongs to the EPSP synthase family. MurA subfamily.

The protein resides in the cytoplasm. The catalysed reaction is phosphoenolpyruvate + UDP-N-acetyl-alpha-D-glucosamine = UDP-N-acetyl-3-O-(1-carboxyvinyl)-alpha-D-glucosamine + phosphate. The protein operates within cell wall biogenesis; peptidoglycan biosynthesis. In terms of biological role, cell wall formation. Adds enolpyruvyl to UDP-N-acetylglucosamine. This chain is UDP-N-acetylglucosamine 1-carboxyvinyltransferase, found in Maricaulis maris (strain MCS10) (Caulobacter maris).